The following is a 428-amino-acid chain: Nucleoside diphosphate phosphatase ENTPD5 (428 aa).

Positions 1-24 (MATSWGTVFFMLVVSCVCSAVSHR) are cleaved as a signal peptide. E172 (proton acceptor) is an active-site residue. An N-linked (GlcNAc...) asparagine glycan is attached at N232. Intrachain disulfides connect C272/C303 and C363/C377. An N-linked (GlcNAc...) asparagine glycan is attached at N368.

Belongs to the GDA1/CD39 NTPase family. In terms of assembly, monomer; active form. Homodimer; disulfide-linked. Homodimers are enzymatically inactive. Ca(2+) serves as cofactor. Mg(2+) is required as a cofactor. N-glycosylated; high-mannose type. Glycosylation is not essential for enzymatic activity. In terms of tissue distribution, expressed in adult liver, kidney, prostate, testis and colon. Much weaker expression in other tissues.

It localises to the endoplasmic reticulum. Its subcellular location is the secreted. The enzyme catalyses a ribonucleoside 5'-diphosphate + H2O = a ribonucleoside 5'-phosphate + phosphate + H(+). It carries out the reaction GDP + H2O = GMP + phosphate + H(+). It catalyses the reaction UDP + H2O = UMP + phosphate + H(+). The catalysed reaction is IDP + H2O = IMP + phosphate + H(+). The enzyme catalyses CDP + H2O = CMP + phosphate + H(+). It carries out the reaction ADP + H2O = AMP + phosphate + H(+). It functions in the pathway protein modification; protein glycosylation. Hydrolyzes nucleoside diphosphates with a preference for GDP, IDP and UDP compared to ADP and CDP. In the lumen of the endoplasmic reticulum, hydrolyzes UDP that acts as an end-product feedback inhibitor of the UDP-Glc:glycoprotein glucosyltransferases. UMP can be transported back by an UDP-sugar antiporter to the cytosol where it is consumed to regenerate UDP-glucose. Therefore, it positively regulates protein reglucosylation by clearing UDP from the ER lumen and by promoting the regeneration of UDP-glucose. Protein reglucosylation is essential to proper glycoprotein folding and quality control in the ER. In Homo sapiens (Human), this protein is Nucleoside diphosphate phosphatase ENTPD5.